A 358-amino-acid polypeptide reads, in one-letter code: MKAIIVRPPNEGVEVKDITLRESTDGKIVVRTRLSGLCGTDRGLVTGRLTFARPPPGYDFLILGHETLGEVVKGNGEFSPGDLVVPVVRRGCGSCLNCMLGRQDFCETGRFTEIGIRGAHGTMREEFLEDPKYLVRVPRELGDEGVLLEPLSNVVKALTEMEYLQRRSWWRCDDSTYSCRTAVVLGSGPIGLLFSMALRSMGFRVIVANRRPPSQVESEITRDIGATFLNTSEHEDLEPDLIVDTSGHPSAVVPLLPRIRKNGAVILFGTTGLERYELTAEEITMLVENNILIFGSVNASKADFQAGVNLLVEWKARYPGVLQRMITKRVSVEEAPQVLKEKVPGEIKTVIDWTARES.

Cysteine 38 contributes to the Zn(2+) binding site. Threonine 40 is a binding site for substrate. Histidine 65, glutamate 66, cysteine 92, cysteine 95, cysteine 98, and cysteine 106 together coordinate Zn(2+). Residues glutamate 113, glutamate 149, and asparagine 153 each coordinate substrate. Glutamate 149 is a Zn(2+) binding site. NADP(+) contacts are provided by residues 187-190 (SGPI), 209-211 (NRR), 268-270 (FGT), 296-298 (SVN), and lysine 342. Asparagine 298 is a binding site for substrate.

Belongs to the zinc-containing alcohol dehydrogenase family. Glucose 1-dehydrogenase subfamily. Zn(2+) is required as a cofactor.

It catalyses the reaction D-glucose + NAD(+) = D-glucono-1,5-lactone + NADH + H(+). The catalysed reaction is D-glucose + NADP(+) = D-glucono-1,5-lactone + NADPH + H(+). Catalyzes the NAD(P)(+)-dependent oxidation of D-glucose to D-gluconate via gluconolactone. Can utilize both NAD(+) and NADP(+) as electron acceptor. Is involved in the degradation of glucose through a non-phosphorylative variant of the Entner-Doudoroff pathway. The chain is Glucose 1-dehydrogenase from Metallosphaera sedula (strain ATCC 51363 / DSM 5348 / JCM 9185 / NBRC 15509 / TH2).